A 195-amino-acid polypeptide reads, in one-letter code: 2-hydroxychromene-2-carboxylate isomerase (195 aa).

Serine 13 serves as the catalytic Nucleophile. Serine 13 is a binding site for glutathione. Substrate contacts are provided by residues lysine 45 and 55–56 (NR). Position 181–184 (181–184 (WGND)) interacts with glutathione.

Belongs to the GST superfamily. NadH family. It depends on glutathione as a cofactor.

It carries out the reaction 2-hydroxychromene-2-carboxylate = (3E)-4-(2-hydroxyphenyl)-2-oxobut-3-enoate. With respect to regulation, activated by salicylate. Functionally, involved in the naphthalene and naphthalenesulfonate catabolic pathway. Catalyzes the reversible glutathione-dependent isomerization of 2-hydroxychromene-2-carboxylate (HCCA) to trans-O-hydroxybenzylidenepyruvate (THBPA). It can also use 2-hydroxybenzo[g]chromene-2-carboxylate as substrate. The protein is 2-hydroxychromene-2-carboxylate isomerase (nsaD) of Sphingobium xenophagum.